Here is a 116-residue protein sequence, read N- to C-terminus: Large ribosomal subunit protein uL18 (116 aa).

The protein belongs to the universal ribosomal protein uL18 family. In terms of assembly, part of the 50S ribosomal subunit; part of the 5S rRNA/L5/L18/L25 subcomplex. Contacts the 5S and 23S rRNAs.

In terms of biological role, this is one of the proteins that bind and probably mediate the attachment of the 5S RNA into the large ribosomal subunit, where it forms part of the central protuberance. This is Large ribosomal subunit protein uL18 from Acholeplasma laidlawii (strain PG-8A).